The chain runs to 341 residues: Hygromycin-B 4-O-kinase (341 aa).

Aspartate 198 acts as the Proton acceptor in catalysis.

This sequence belongs to the aminoglycoside phosphotransferase family.

The catalysed reaction is hygromycin B + ATP = 4-O-phosphohygromycin B + ADP + H(+). In terms of biological role, the aminoglycoside phosphotransferases achieve inactivation of their antibiotic substrates by phosphorylation. Only phosphorylates hygromycin and closely related compounds such as demethyl analogs and destomycin. The chain is Hygromycin-B 4-O-kinase (hph) from Escherichia coli.